A 330-amino-acid polypeptide reads, in one-letter code: Fructose-1,6-bisphosphatase class 1 (330 aa).

4 residues coordinate Mg(2+): glutamate 84, aspartate 103, leucine 105, and aspartate 106. Residues 106 to 109 (DGSS), asparagine 196, and lysine 262 each bind substrate. Glutamate 268 is a binding site for Mg(2+).

The protein belongs to the FBPase class 1 family. As to quaternary structure, homotetramer. Mg(2+) is required as a cofactor.

The protein resides in the cytoplasm. It carries out the reaction beta-D-fructose 1,6-bisphosphate + H2O = beta-D-fructose 6-phosphate + phosphate. It participates in carbohydrate biosynthesis; gluconeogenesis. This chain is Fructose-1,6-bisphosphatase class 1, found in Shewanella putrefaciens (strain CN-32 / ATCC BAA-453).